The chain runs to 185 residues: MLTLASKLKRDDGLKGSRASATASDSTRRVSVRDRLLVKEVAELEANLPCTCKVHFPDPNKLHCFQLTVTPDEGYYQGGKFQFETEVPDAYNMVPPKVKCLTRIWHPNITETGEICLSLLREHSIDGTGWAPTRTLKDVVWGLNSLFTDLLNFDDPLNIEAAEHHLRDKEDFRNKVEDYIKRYAR.

The residue at position 1 (M1) is an N-acetylmethionine. The interval 1 to 29 (MLTLASKLKRDDGLKGSRASATASDSTRR) is interaction with UBA3. In terms of domain architecture, UBC core spans 32 to 185 (VRDRLLVKEV…VEDYIKRYAR (154 aa)). C116 acts as the Glycyl thioester intermediate in catalysis.

This sequence belongs to the ubiquitin-conjugating enzyme family. UBE2F subfamily. In terms of assembly, interacts with UBA3 and RBX2. Interacts (N-terminally acetylated form) with (via DCUN1 domain) DCUN1D1, DCUN1D2, DCUN1D3, DCUN1D4 and DCUN1D5. The acetylation of Met-1 increases affinity for DCUN1D3 by about 2 orders of magnitude and is crucial for NEDD8 transfer to cullins.

The catalysed reaction is [E1 NEDD8-activating enzyme]-S-[NEDD8 protein]-yl-L-cysteine + [E2 NEDD8-conjugating enzyme]-L-cysteine = [E1 NEDD8-activating enzyme]-L-cysteine + [E2 NEDD8-conjugating enzyme]-S-[NEDD8-protein]-yl-L-cysteine.. The protein operates within protein modification; protein neddylation. Its function is as follows. Accepts the ubiquitin-like protein NEDD8 from the UBA3-NAE1 E1 complex and catalyzes its covalent attachment to other proteins. Together with the E3 ubiquitin ligase RNF7/RBX2, specifically neddylates cullin-5 (CUL5). Does not neddylate CUL1, CUL2, CUL3, CUL4A or CUL4B. Mediates neddylation of the CUL9-RBX1 complex. This is NEDD8-conjugating enzyme UBE2F (UBE2F) from Bos taurus (Bovine).